Reading from the N-terminus, the 198-residue chain is Putative coiled-coil domain-containing protein 196 (198 aa).

Positions 24 to 117 (NYLKELNEDL…RKEMEMLWNK (94 aa)) form a coiled coil. Composition is skewed to basic and acidic residues over residues 135–144 (NKTDLQDGKA) and 154–167 (TKNE…EKGK). Residues 135–198 (NKTDLQDGKA…VSGTSQHHSE (64 aa)) form a disordered region. The segment covering 187–198 (GQVSGTSQHHSE) has biased composition (polar residues).

The protein is Putative coiled-coil domain-containing protein 196 of Bos taurus (Bovine).